Reading from the N-terminus, the 161-residue chain is Low molecular weight phosphotyrosine protein phosphatase (161 aa).

Residue C14 is the Nucleophile of the active site. R20 serves as the catalytic Transition state stabilizer. At S57 the chain carries Phosphoserine. Catalysis depends on D133, which acts as the Proton donor.

Belongs to the low molecular weight phosphotyrosine protein phosphatase family.

The protein localises to the cytoplasm. The enzyme catalyses O-phospho-L-tyrosyl-[protein] + H2O = L-tyrosyl-[protein] + phosphate. It catalyses the reaction a phosphate monoester + H2O = an alcohol + phosphate. Acts on tyrosine phosphorylated proteins, low-MW aryl phosphates and natural and synthetic acyl phosphates. This chain is Low molecular weight phosphotyrosine protein phosphatase, found in Saccharomyces cerevisiae (strain ATCC 204508 / S288c) (Baker's yeast).